Reading from the N-terminus, the 907-residue chain is Leucine--tRNA ligase (907 aa).

The 'HIGH' region motif lies at 42-52 (PYPSGKLHMGH). Positions 651–655 (TMSKS) match the 'KMSKS' region motif. Lysine 654 contacts ATP.

This sequence belongs to the class-I aminoacyl-tRNA synthetase family.

The protein resides in the cytoplasm. It carries out the reaction tRNA(Leu) + L-leucine + ATP = L-leucyl-tRNA(Leu) + AMP + diphosphate. The protein is Leucine--tRNA ligase of Verminephrobacter eiseniae (strain EF01-2).